Here is a 174-residue protein sequence, read N- to C-terminus: MSETATVGGGCFWCTEAAMKELAGVNTVTSGYAGGDIDNPTYKQVCSGTTDHAEVVQIEYDPTKIEYSELLEVFFATHDPTQLNRQGPDVGTQYRSIILTHTAEQRATAEAYIEALNDHYDDAIVTEIESLERFWSAEEYHQDYFEKNPSDAYCRMHAQPKVEKVRETFTEKLT.

Cys-11 is an active-site residue.

Belongs to the MsrA Met sulfoxide reductase family.

The catalysed reaction is L-methionyl-[protein] + [thioredoxin]-disulfide + H2O = L-methionyl-(S)-S-oxide-[protein] + [thioredoxin]-dithiol. The enzyme catalyses [thioredoxin]-disulfide + L-methionine + H2O = L-methionine (S)-S-oxide + [thioredoxin]-dithiol. Has an important function as a repair enzyme for proteins that have been inactivated by oxidation. Catalyzes the reversible oxidation-reduction of methionine sulfoxide in proteins to methionine. In Haloquadratum walsbyi (strain DSM 16790 / HBSQ001), this protein is Peptide methionine sulfoxide reductase MsrA.